The primary structure comprises 200 residues: Holliday junction branch migration complex subunit RuvA (200 aa).

The tract at residues 1 to 63 (MIASVRGVVT…EDSLTLYGFA (63 aa)) is domain I. The segment at 64-142 (DDNAKALFEL…PVPVGGDGAA (79 aa)) is domain II. Residues 143 to 151 (GVTTGAWPE) are flexible linker. Residues 151-200 (EQVRQALVGLGWTAGQAEQAVAAVAETVDGEVPPVPVLLRQAIRLLGRTR) are domain III.

This sequence belongs to the RuvA family. Homotetramer. Forms an RuvA(8)-RuvB(12)-Holliday junction (HJ) complex. HJ DNA is sandwiched between 2 RuvA tetramers; dsDNA enters through RuvA and exits via RuvB. An RuvB hexamer assembles on each DNA strand where it exits the tetramer. Each RuvB hexamer is contacted by two RuvA subunits (via domain III) on 2 adjacent RuvB subunits; this complex drives branch migration. In the full resolvosome a probable DNA-RuvA(4)-RuvB(12)-RuvC(2) complex forms which resolves the HJ.

The protein localises to the cytoplasm. Functionally, the RuvA-RuvB-RuvC complex processes Holliday junction (HJ) DNA during genetic recombination and DNA repair, while the RuvA-RuvB complex plays an important role in the rescue of blocked DNA replication forks via replication fork reversal (RFR). RuvA specifically binds to HJ cruciform DNA, conferring on it an open structure. The RuvB hexamer acts as an ATP-dependent pump, pulling dsDNA into and through the RuvAB complex. HJ branch migration allows RuvC to scan DNA until it finds its consensus sequence, where it cleaves and resolves the cruciform DNA. This Salinispora arenicola (strain CNS-205) protein is Holliday junction branch migration complex subunit RuvA.